Reading from the N-terminus, the 367-residue chain is 2-aminoethylphosphonate--pyruvate transaminase (367 aa).

K194 carries the post-translational modification N6-(pyridoxal phosphate)lysine.

Belongs to the class-V pyridoxal-phosphate-dependent aminotransferase family. PhnW subfamily. In terms of assembly, homodimer. Pyridoxal 5'-phosphate is required as a cofactor.

It catalyses the reaction (2-aminoethyl)phosphonate + pyruvate = phosphonoacetaldehyde + L-alanine. Functionally, involved in phosphonate degradation. This Salmonella gallinarum (strain 287/91 / NCTC 13346) protein is 2-aminoethylphosphonate--pyruvate transaminase.